The chain runs to 518 residues: GMP synthase [glutamine-hydrolyzing] (518 aa).

Residues 13–203 (KIIVLDFGSQ…ALNICGCKGD (191 aa)) form the Glutamine amidotransferase type-1 domain. Catalysis depends on Cys-90, which acts as the Nucleophile. Catalysis depends on residues His-177 and Glu-179. Residues 204–393 (WTMENFSEVE…LGMPDAIVWR (190 aa)) form the GMPS ATP-PPase domain. 231–237 (SGGVDSS) contacts ATP.

As to quaternary structure, homodimer.

The enzyme catalyses XMP + L-glutamine + ATP + H2O = GMP + L-glutamate + AMP + diphosphate + 2 H(+). The protein operates within purine metabolism; GMP biosynthesis; GMP from XMP (L-Gln route): step 1/1. Functionally, catalyzes the synthesis of GMP from XMP. This is GMP synthase [glutamine-hydrolyzing] from Listeria innocua serovar 6a (strain ATCC BAA-680 / CLIP 11262).